The primary structure comprises 525 residues: uncharacterized protein (525 aa).

The segment at residues cysteine 21–cysteine 48 is a DNA-binding region (zn(2)-C6 fungal-type).

It is found in the cytoplasm. It localises to the nucleus. This is an uncharacterized protein from Schizosaccharomyces pombe (strain 972 / ATCC 24843) (Fission yeast).